The following is a 318-amino-acid chain: Small ribosomal subunit protein mS26 (318 aa).

Positions 295–318 (IDSKLNPTSNGAGNNGNNNNTTNL) are disordered. Low complexity predominate over residues 300–318 (NPTSNGAGNNGNNNNTTNL).

It belongs to the mitochondrion-specific ribosomal protein mS26 family. Component of the mitochondrial small ribosomal subunit (mt-SSU). Mature yeast 74S mitochondrial ribosomes consist of a small (37S) and a large (54S) subunit. The 37S small subunit contains a 15S ribosomal RNA (15S mt-rRNA) and 34 different proteins. The 54S large subunit contains a 21S rRNA (21S mt-rRNA) and 46 different proteins.

It is found in the mitochondrion. Component of the mitochondrial ribosome (mitoribosome), a dedicated translation machinery responsible for the synthesis of mitochondrial genome-encoded proteins, including at least some of the essential transmembrane subunits of the mitochondrial respiratory chain. The mitoribosomes are attached to the mitochondrial inner membrane and translation products are cotranslationally integrated into the membrane. The protein is Small ribosomal subunit protein mS26 (PET123) of Saccharomyces cerevisiae (strain ATCC 204508 / S288c) (Baker's yeast).